The following is a 508-amino-acid chain: Photosystem II CP47 reaction center protein (508 aa).

The next 6 helical transmembrane spans lie at 21–36 (AVHI…WAGS), 101–115 (IVFS…IWHW), 140–156 (GIHL…FGAF), 203–218 (IAAG…FHLS), 237–252 (VLSS…AFVV), and 457–472 (TFAL…HGAR).

This sequence belongs to the PsbB/PsbC family. PsbB subfamily. PSII is composed of 1 copy each of membrane proteins PsbA, PsbB, PsbC, PsbD, PsbE, PsbF, PsbH, PsbI, PsbJ, PsbK, PsbL, PsbM, PsbT, PsbX, PsbY, PsbZ, Psb30/Ycf12, at least 3 peripheral proteins of the oxygen-evolving complex and a large number of cofactors. It forms dimeric complexes. Requires Binds multiple chlorophylls. PSII binds additional chlorophylls, carotenoids and specific lipids. as cofactor.

It localises to the plastid. The protein resides in the chloroplast thylakoid membrane. In terms of biological role, one of the components of the core complex of photosystem II (PSII). It binds chlorophyll and helps catalyze the primary light-induced photochemical processes of PSII. PSII is a light-driven water:plastoquinone oxidoreductase, using light energy to abstract electrons from H(2)O, generating O(2) and a proton gradient subsequently used for ATP formation. This is Photosystem II CP47 reaction center protein from Lolium perenne (Perennial ryegrass).